A 506-amino-acid polypeptide reads, in one-letter code: MSISIRPDEISSIIQQQIEQYDQEVKVANVGTVLQVGDGIARIYGLEKAMAGELLEFEDGTVGIAQNLEEDNVGAVLMGEGREIQEGSTVTATGRIAQIGVGEALIGRVVDALGRAIDGKGDIKASESRLIESPAPGIIARRSVHEPMQTGITAIDSMIPIGRGQRELIIGDRQTGKTAIAIDTIINQKGEDVVCVYVAIGQKASTVANVVQTLQEKGAMDYTVVVAAGASEPATLQFLAPYTGATIAEYFMYKGKATLVIYDDLSKQAQAYRQMSLLLRRPPGREAYPGDVFYIHSRLLERAAKLSDELGKGSMTALPIIETQAGDVSAYIPTNVISITDGQIFLSSDLFNAGIRPAVNPGISVSRVGSAAQTKAMKKVAGKIKLELAQFDDLQAFAQFASDLDKATQDQLARGQRLRELLKQSQNQPLSVAEQVAILYAGINGYLDDIPVDKVTTFTKGLRDYLKSGVNPYFQDVQSKKTLGDDEEKALKAALDDYKKTFKATA.

171–178 is an ATP binding site; that stretch reads GDRQTGKT.

Belongs to the ATPase alpha/beta chains family. In terms of assembly, F-type ATPases have 2 components, CF(1) - the catalytic core - and CF(0) - the membrane proton channel. CF(1) has five subunits: alpha(3), beta(3), gamma(1), delta(1), epsilon(1). CF(0) has four main subunits: a(1), b(1), b'(1) and c(9-12).

Its subcellular location is the cellular thylakoid membrane. The enzyme catalyses ATP + H2O + 4 H(+)(in) = ADP + phosphate + 5 H(+)(out). Functionally, produces ATP from ADP in the presence of a proton gradient across the membrane. The alpha chain is a regulatory subunit. The protein is ATP synthase subunit alpha of Trichormus variabilis (strain ATCC 29413 / PCC 7937) (Anabaena variabilis).